Consider the following 78-residue polypeptide: Large ribosomal subunit protein bL31 (78 aa).

Zn(2+) contacts are provided by Cys16, Cys18, Cys38, and Cys41.

It belongs to the bacterial ribosomal protein bL31 family. Type A subfamily. In terms of assembly, part of the 50S ribosomal subunit. The cofactor is Zn(2+).

Binds the 23S rRNA. This is Large ribosomal subunit protein bL31 from Parafrankia sp. (strain EAN1pec).